The chain runs to 343 residues: MDLPPALLSFYCPIASEVSPEHEAVAQEMYAWIHAMSLTSDNRQAKMLAQAGAGFNSYFTPRARGELARALSKYNVCAWIANGMVQEIRDPGTFGAMAARWARIMEEPATCPADGIPMDFALADAFSHIRRTLSPVKWQHFSAAQSHWMHGLAWENCLHQVKGLTVHDYLSFRYVMSGCFAAAAFAYAVPERHPSAEEWAHPKVRAAADAAMMVDALDNDRYSYLKESLTEADKKTIFAALRHENPALGREEVIVRGVQLRDRILTLYLTLRGELLCDASEGLRSYLTGLDLIIAGNLVFCADMGLRYGLPEGSVRTDAEPLDRTVAPPGIGAIDHWWAQAGA.

3 residues coordinate Mg(2+): Asn219, Ser223, and Glu227.

It belongs to the terpene synthase family. In terms of assembly, homodimer. Mg(2+) serves as cofactor.

It carries out the reaction (2E,6E,10E)-geranylgeranyl diphosphate + H2O = (R)-nephthenol + diphosphate. The catalysed reaction is (2E,6E,10E)-geranylgeranyl diphosphate = (R)-cembrene A + diphosphate. It catalyses the reaction (2E,6E,10E)-geranylgeranyl diphosphate + H2O = (1S,4E,8E,12E)-2,2,5,9,13-pentamethylcyclopentadeca-4,8,12-trien-1-ol + diphosphate. Diterpene cyclases that can form multiple diterpene products. The polypeptide is Diterpene cyclase DtcycB (Streptomyces sp).